Reading from the N-terminus, the 24-residue chain is Heat shock 70 kDa protein 4L (24 aa).

Thr-19 bears the Phosphothreonine mark.

Belongs to the heat shock protein 70 family. In terms of assembly, homodimer. In the testis, forms a complex with p53 at 32.5 degrees Celsius which is scrotal temperature but not at 37 or 42 degrees Celsius. In terms of tissue distribution, expressed at high levels in testis and at much lower levels in brain. In testis, expressed mainly in germ cells. Widespread in brain with highest expression in cerebellum and medulla oblongata. Also expressed in renal medulla of water-restricted animals.

The protein localises to the cytoplasm. Its subcellular location is the nucleus. Functionally, possesses chaperone activity in vitro where it inhibits aggregation of citrate synthase. This is Heat shock 70 kDa protein 4L (Hspa4l) from Rattus norvegicus (Rat).